A 132-amino-acid chain; its full sequence is mRNA interferase toxin YafO (132 aa).

In terms of assembly, probably forms a complex with the antitoxin YafN which inhibits the mRNA interferase activity.

Its function is as follows. Toxic component of a type II toxin-antitoxin (TA) system. A translation-dependent mRNA interferase. Overexpression causes cessation of cell growth and inhibits cell proliferation via inhibition of translation; this blockage is overcome by subsequent expression of antitoxin YafN. Overexpression causes cleavage of a number of mRNAs in a ribosome-dependent fashion. YafO binding to the 50S ribosomal subunit in the translation complex induces mRNA cleavage 3' to the region protected by the ribosome; YafO alone is not able to digest mRNA. This chain is mRNA interferase toxin YafO (yafO), found in Escherichia coli (strain K12).